The chain runs to 195 residues: dCTP deaminase (195 aa).

Residues 110–115 (RSSLAR), D128, 136–138 (VLE), Y171, K178, and Q182 each bind dCTP. The active-site Proton donor/acceptor is E138. Positions 171-195 (YSSRKDAKYKNQQSAVASRIDEDKE) are disordered.

Belongs to the dCTP deaminase family. In terms of assembly, homotrimer.

It catalyses the reaction dCTP + H2O + H(+) = dUTP + NH4(+). It participates in pyrimidine metabolism; dUMP biosynthesis; dUMP from dCTP (dUTP route): step 1/2. Its function is as follows. Catalyzes the deamination of dCTP to dUTP. This Haemophilus influenzae (strain ATCC 51907 / DSM 11121 / KW20 / Rd) protein is dCTP deaminase.